A 407-amino-acid polypeptide reads, in one-letter code: RING finger protein 44 (407 aa).

The segment at 26–58 is disordered; it reads LSSSPGQLWGRPSNLSVEEHRASAPAGRSPRML. The RING-type; atypical zinc finger occupies 355 to 396; it reads CVVCFSDFEVRQLLRVLPCNHEFHAKCVDKWLKANRTCPICR.

The polypeptide is RING finger protein 44 (Rnf44) (Mus musculus (Mouse)).